We begin with the raw amino-acid sequence, 96 residues long: Citrate lyase acyl carrier protein (96 aa).

Ser14 is subject to O-(phosphoribosyl dephospho-coenzyme A)serine.

Belongs to the CitD family. Oligomer with a subunit composition of (alpha,beta,gamma)6.

Its subcellular location is the cytoplasm. Its function is as follows. Covalent carrier of the coenzyme of citrate lyase. The polypeptide is Citrate lyase acyl carrier protein (Lactiplantibacillus plantarum (strain ATCC BAA-793 / NCIMB 8826 / WCFS1) (Lactobacillus plantarum)).